A 438-amino-acid polypeptide reads, in one-letter code: CBL-interacting protein kinase 32 (438 aa).

Residues 13-268 (YELGRTIGEG…IPEILEDEWF (256 aa)) form the Protein kinase domain. Residues 19–27 (IGEGTFAKV) and Lys42 contribute to the ATP site. Catalysis depends on Asp136, which acts as the Proton acceptor. An activation loop region spans residues 154 to 183 (DFGLSALSQQIKDDGLLHTTCGTPNYVAPE). One can recognise an NAF domain in the interval 305–329 (EEPEALNAFELISMSAGLNLGNLFD). The tract at residues 335-364 (KRETRFTSKCPPKEIVRKIEEAAKPLGFDV) is PPI.

The protein belongs to the protein kinase superfamily. CAMK Ser/Thr protein kinase family. SNF1 subfamily. Requires Mn(2+) as cofactor.

The catalysed reaction is L-seryl-[protein] + ATP = O-phospho-L-seryl-[protein] + ADP + H(+). The enzyme catalyses L-threonyl-[protein] + ATP = O-phospho-L-threonyl-[protein] + ADP + H(+). CIPK serine-threonine protein kinases interact with CBL proteins. Binding of a CBL protein to the regulatory NAF domain of CIPK protein lead to the activation of the kinase in a calcium-dependent manner. The protein is CBL-interacting protein kinase 32 (CIPK32) of Oryza sativa subsp. japonica (Rice).